Reading from the N-terminus, the 333-residue chain is Homeobox protein Hox-A1 (333 aa).

Residues 61-82 (ITSPHHHHHHHHHPQPATYQTS) are disordered. The span at 64-74 (PHHHHHHHHHP) shows a compositional bias: basic residues. The tract at residues 74–202 (PQPATYQTSG…PASETSSPAQ (129 aa)) is interaction with OGT. T152 is a glycosylation site (O-linked (GlcNAc) threonine). The Antp-type hexapeptide motif lies at 203 to 208 (TFDWMK). The segment at residues 227–286 (QPNAVRTNFTTKQLTELEKEFHFNKYLTRARSEIAASLQLNETQVKIWFQNRRMKQKKRE) is a DNA-binding region (homeobox). The interval 279-333 (RMKQKKREKEGLLPMSPATPPGSDEKTEESSEKSSSSPSAPSPASSTSDTLTTSH) is disordered. The span at 301-310 (SDEKTEESSE) shows a compositional bias: basic and acidic residues. Over residues 311–333 (KSSSSPSAPSPASSTSDTLTTSH) the composition is skewed to low complexity.

The protein belongs to the Antp homeobox family. Labial subfamily. Interacts with OGT (via TPR repeats domain); the interaction takes place mainly in the nucleus. Forms a DNA-binding heterodimer with transcription factor PBX1. Post-translationally, glycosylated by OGT.

Its subcellular location is the nucleus. Functionally, sequence-specific transcription factor. Regulates multiple developmental processes including brainstem, inner and outer ear, abducens nerve and cardiovascular development and morphogenesis as well as cognition and behavior. Also part of a developmental regulatory system that provides cells with specific positional identities on the anterior-posterior axis. Acts on the anterior body structures. Seems to act in the maintenance and/or generation of hindbrain segments. Activates transcription in the presence of PBX1A and PKNOX1. The chain is Homeobox protein Hox-A1 (Hoxa1) from Rattus norvegicus (Rat).